A 66-amino-acid polypeptide reads, in one-letter code: Beta-toxin Chui3 (66 aa).

Residues 1–66 enclose the LCN-type CS-alpha/beta domain; that stretch reads KEGYLVELGT…VWPLKNKTCR (66 aa). Intrachain disulfides connect C12-C65, C16-C41, C25-C46, and C29-C48.

It belongs to the long (4 C-C) scorpion toxin superfamily. Sodium channel inhibitor family. Beta subfamily. In terms of tissue distribution, expressed by the venom gland.

It is found in the secreted. Functionally, beta toxins bind voltage-independently at site-4 of sodium channels (Nav) and shift the voltage of activation toward more negative potentials thereby affecting sodium channel activation and promoting spontaneous and repetitive firing. Acts on human sodium channel Nav1.6/SCN8A. The chain is Beta-toxin Chui3 from Centruroides huichol (Scorpion).